Consider the following 1125-residue polypeptide: ATP-dependent DNA helicase Hel308 (1125 aa).

Residues 1-29 (MKVDELPIDERIKRVIKERGIEELYPPQA) carry the Q motif motif. ATP-binding positions include Gln-28 and 46 to 53 (IPTASGKT). Residues 33-197 (KSGVLEGKNL…WLDASLVVSD (165 aa)) enclose the Helicase ATP-binding domain. Positions 145 to 148 (DEVH) match the DEAH box motif. The Helicase C-terminal domain occupies 226-440 (NWESLVLDAV…ELKERLESET (215 aa)). A DOD-type homing endonuclease domain is found at 500–640 (LIGLWIAEGS…LQLLVASLGY (141 aa)).

Belongs to the helicase family. Hel308 subfamily. In terms of assembly, monomer. In terms of processing, this protein undergoes a protein self splicing that involves a post-translational excision of the intervening region (intein) followed by peptide ligation.

It catalyses the reaction Couples ATP hydrolysis with the unwinding of duplex DNA by translocating in the 3'-5' direction.. It carries out the reaction ATP + H2O = ADP + phosphate + H(+). In terms of biological role, DNA-dependent ATPase and 3'-5' DNA helicase that may be involved in repair of stalled replication forks. The polypeptide is ATP-dependent DNA helicase Hel308 (Thermococcus kodakarensis (strain ATCC BAA-918 / JCM 12380 / KOD1) (Pyrococcus kodakaraensis (strain KOD1))).